The sequence spans 209 residues: Ribosomal RNA large subunit methyltransferase E (209 aa).

S-adenosyl-L-methionine contacts are provided by glycine 63, tryptophan 65, aspartate 83, aspartate 99, and aspartate 124. Catalysis depends on lysine 164, which acts as the Proton acceptor.

This sequence belongs to the class I-like SAM-binding methyltransferase superfamily. RNA methyltransferase RlmE family.

It localises to the cytoplasm. The catalysed reaction is uridine(2552) in 23S rRNA + S-adenosyl-L-methionine = 2'-O-methyluridine(2552) in 23S rRNA + S-adenosyl-L-homocysteine + H(+). In terms of biological role, specifically methylates the uridine in position 2552 of 23S rRNA at the 2'-O position of the ribose in the fully assembled 50S ribosomal subunit. In Shewanella pealeana (strain ATCC 700345 / ANG-SQ1), this protein is Ribosomal RNA large subunit methyltransferase E.